The primary structure comprises 292 residues: NAD kinase (292 aa).

Catalysis depends on Asp73, which acts as the Proton acceptor. NAD(+) is bound by residues 73-74 (DG), 147-148 (NE), His158, Arg175, Asp177, 188-193 (TAYSLS), and Gln247.

This sequence belongs to the NAD kinase family. Requires a divalent metal cation as cofactor.

The protein resides in the cytoplasm. The enzyme catalyses NAD(+) + ATP = ADP + NADP(+) + H(+). Its function is as follows. Involved in the regulation of the intracellular balance of NAD and NADP, and is a key enzyme in the biosynthesis of NADP. Catalyzes specifically the phosphorylation on 2'-hydroxyl of the adenosine moiety of NAD to yield NADP. This Shigella boydii serotype 18 (strain CDC 3083-94 / BS512) protein is NAD kinase.